An 837-amino-acid polypeptide reads, in one-letter code: Amyloid-beta A4 precursor protein-binding family A member 1 (837 aa).

Disordered stretches follow at residues 1-93 (MNHL…DTAE), 238-342 (YDER…SKEK), and 358-435 (EEVK…ESRK). The span at 23-38 (ESVEADLEHPEVEEEQ) shows a compositional bias: acidic residues. Phosphoserine occurs at positions 78, 242, 246, 248, 263, 280, and 285. The segment at 226 to 314 (YRQEALGARL…TPAGGRPDSP (89 aa)) is munc-18-1 binding. The span at 238-254 (YDERSDGESDSPEKEAE) shows a compositional bias: basic and acidic residues. Thr-305 is modified (phosphothreonine). Phosphoserine occurs at positions 313 and 367. Thr-370 is modified (phosphothreonine). Residues 373-436 (EPKEPIWVMR…ASTNKESRKS (64 aa)) form an LIN-2/CASK binding region. The span at 387 to 398 (PTRDCDDQRPMD) shows a compositional bias: basic and acidic residues. Positions 399–418 (GDSPSPGSSSPLGAESSSTS) are enriched in low complexity. Phosphoserine occurs at positions 401, 403, 408, and 568. Residues 457 to 643 (DGIIFAANYL…LLNTQDMYND (187 aa)) form the PID domain. The interval 626 to 641 (LSQKEYSDLLNTQDMY) is autoinhibitory helix linker. PDZ domains are found at residues 656-742 (DVFI…IVRC) and 747-822 (TVLI…TMPA).

In terms of assembly, part of a multimeric complex containing STXBP1 and STX1A. Interacts with STXBP1. Also part of the brain-specific heterotrimeric complex LIN-10/X11-alpha, LIN-2/CASK, and LIN7. Component of the brain-specific heterotrimeric complex (LIN-10-LIN-2-LIN-7 complex) composed of at least APBA1, CASK, and LIN7, which associates with the motor protein KIF17 to transport vesicles along microtubules. Within the complex, interacts (via PDZ domain) with the motor protein KIF17; the interaction is direct and is required for association of KIF17 with the cargo that is to be transported. Both isoform 1 and isoform 2 bind to the cytoplasmic domain of amyloid protein (APP). Interacts (via PDZ 1 and 2 domains) with FSPB. Isoform 2, but not isoform 1, interacts (via its truncated PID domain) with active, GTP-bound RAB6A and RAB6B. Brain and spinal cord. Isoform 2 is expressed in testis and brain, but not detected in lung, liver or spleen.

It is found in the cytoplasm. Its subcellular location is the perinuclear region. It localises to the nucleus. The protein resides in the golgi apparatus. Its function is as follows. Putative function in synaptic vesicle exocytosis by binding to Munc18-1, an essential component of the synaptic vesicle exocytotic machinery. May modulate processing of the amyloid-beta precursor protein (APP) and hence formation of APP-beta. Component of the LIN-10-LIN-2-LIN-7 complex, which associates with the motor protein KIF17 to transport vesicles containing N-methyl-D-aspartate (NMDA) receptor subunit NR2B along microtubules. This chain is Amyloid-beta A4 precursor protein-binding family A member 1 (APBA1), found in Homo sapiens (Human).